A 440-amino-acid polypeptide reads, in one-letter code: Thymidine phosphorylase (440 aa).

It belongs to the thymidine/pyrimidine-nucleoside phosphorylase family. In terms of assembly, homodimer.

The catalysed reaction is thymidine + phosphate = 2-deoxy-alpha-D-ribose 1-phosphate + thymine. The protein operates within pyrimidine metabolism; dTMP biosynthesis via salvage pathway; dTMP from thymine: step 1/2. Its function is as follows. The enzymes which catalyze the reversible phosphorolysis of pyrimidine nucleosides are involved in the degradation of these compounds and in their utilization as carbon and energy sources, or in the rescue of pyrimidine bases for nucleotide synthesis. This chain is Thymidine phosphorylase, found in Salmonella schwarzengrund (strain CVM19633).